We begin with the raw amino-acid sequence, 388 residues long: Xylose isomerase (388 aa).

Active-site residues include histidine 54 and aspartate 57. Residues glutamate 181, glutamate 217, histidine 220, aspartate 245, aspartate 255, aspartate 257, and aspartate 287 each contribute to the Mg(2+) site.

The protein belongs to the xylose isomerase family. As to quaternary structure, homotetramer. It depends on Mg(2+) as a cofactor.

It is found in the cytoplasm. The catalysed reaction is alpha-D-xylose = alpha-D-xylulofuranose. The chain is Xylose isomerase from Streptomyces thermocyaneoviolaceus.